The sequence spans 301 residues: Transcription factor bHLH103 (301 aa).

Residues 29–106 (PRSAEIVVDF…LEGLFDSSEQ (78 aa)) form the KRAB domain. Disordered stretches follow at residues 161–184 (EKSGELEDIESSQPLKRPRLETPS) and 239–272 (TSPHLNSIGSGEQKQWSDKSSNNTHNQNCSPRQD). One can recognise a bHLH domain in the interval 180-229 (LETPSHFPSFKVRKEKLGDRITALQQLVSPFGKTDTASVLHDAIDYIKFL). Over residues 239–269 (TSPHLNSIGSGEQKQWSDKSSNNTHNQNCSP) the composition is skewed to polar residues.

As to quaternary structure, homodimer. In terms of tissue distribution, mature root endodermis.

Its subcellular location is the nucleus. In Arabidopsis thaliana (Mouse-ear cress), this protein is Transcription factor bHLH103 (BHLH103).